A 1245-amino-acid chain; its full sequence is Nidogen-1 (1245 aa).

The signal sequence occupies residues 1–28; it reads MLDASGCSWAMWTWALLQLLLLVGPGGC. The 163-residue stretch at 106-268 folds into the NIDO domain; the sequence is PFLADLDTTD…GVWVFEIGSP (163 aa). N187 carries N-linked (GlcNAc...) asparagine glycosylation. Residues Y290 and Y295 each carry the sulfotyrosine modification. A glycan (O-linked (GalNAc...) threonine) is linked at T299. The disordered stretch occupies residues 307 to 344; that stretch reads VATPSPSHSPRRGYPDPHNVPRILSPGYEATERPRGVP. Residue S331 is glycosylated (O-linked (GalNAc...) serine). Residues T337 and T345 are each glycosylated (O-linked (GalNAc...) threonine). O-linked (GalNAc...) threonine; partial glycosylation is present at T348. The region spanning 384 to 424 is the EGF-like 1 domain; it reads SQQTCANNRHQCSVHAECRDYATGFCCRCVANYTGNGRQCV. 19 disulfides stabilise this stretch: C388/C401, C395/C410, C409/C616, C412/C423, C670/C683, C677/C693, C695/C706, C712/C725, C719/C734, C736/C748, C760/C775, C767/C785, C787/C798, C804/C815, C809/C824, C826/C837, C847/C876, C887/C894, and C896/C917. N415 carries an N-linked (GlcNAc...) asparagine glycan. Residues 428-665 enclose the Nidogen G2 beta-barrel domain; sequence SPQRVNGKVK…GPVRDGSPDA (238 aa). The 42-residue stretch at 666–707 folds into the EGF-like 2 domain; it reads LQNPCYIGTHGCDSNAACRPGPGTQFTCECSIGFRGDGQTCY. The Cell attachment site signature appears at 700 to 702; it reads RGD. The EGF-like 3; calcium-binding domain maps to 708–749; that stretch reads DIDECSEQPSRCGNHAVCNNLPGTFRCECVEGYHFSDRGTCV. The region spanning 756-799 is the EGF-like 4 domain; the sequence is PINYCETGLHNCDIPQRAQCIYMGGSSYTCSCLPGFSGDGRACR. Residues 800–838 form the EGF-like 5; calcium-binding domain; it reads DVDECQHSRCHPDAFCYNTPGSFTCQCKPGYQGDGFRCM. Positions 844-917 constitute a Thyroglobulin type-1 domain; it reads KTRCQLEREH…RTPPGMRPPC (74 aa). O-linked (GalNAc...) threonine glycans are attached at residues T920 and T933. LDL-receptor class B repeat units follow at residues 988–1030, 1031–1073, 1074–1118, and 1119–1160; these read KVVY…DHLG, RTIF…DPVR, GNLY…DAFS, and SQLC…YGKN. The 37-residue stretch at 1206 to 1242 folds into the EGF-like 6 domain; that stretch reads GHNYCSVNNGGCTHLCLPTPGSRTCRCPDNTLGVDCI. Disulfide bonds link C1210-C1221, C1217-C1230, and C1232-C1241.

As to quaternary structure, interacts with FBLN1. Interacts with LGALS3BP. Interacts with PLXDC1. Interacts with SVEP1. In terms of processing, N- and O-glycosylated.

The protein localises to the secreted. The protein resides in the extracellular space. It is found in the extracellular matrix. Its subcellular location is the basement membrane. Functionally, sulfated glycoprotein widely distributed in basement membranes and tightly associated with laminin. Also binds to collagen IV and perlecan. It probably has a role in cell-extracellular matrix interactions. The chain is Nidogen-1 (Nid1) from Mus musculus (Mouse).